Consider the following 450-residue polypeptide: Phosphoglucosamine mutase (450 aa).

Residue S101 is the Phosphoserine intermediate of the active site. Mg(2+) is bound by residues S101, D240, D242, and D244. The residue at position 101 (S101) is a Phosphoserine.

It belongs to the phosphohexose mutase family. Mg(2+) is required as a cofactor. In terms of processing, activated by phosphorylation.

It catalyses the reaction alpha-D-glucosamine 1-phosphate = D-glucosamine 6-phosphate. Its function is as follows. Catalyzes the conversion of glucosamine-6-phosphate to glucosamine-1-phosphate. The polypeptide is Phosphoglucosamine mutase (Streptococcus sanguinis (strain SK36)).